A 444-amino-acid polypeptide reads, in one-letter code: MKVLLIGGGAREHAIAMALKKNELVELYTLMKNKNPGIYALSEEVSFNSETDVPAIKEFAEKIKPEIAVIGPESPLGVGASDLLEEMGIPTVGPKKLPAQIETSKEFMRNLFKKYEIDGSLKYAAFNDYGTELEGFIDEMTSLGKDVVVKPAGLTGGKGVKVVGEQLKDNEEAKIYAKEVFDKSIGGGKIIIEEKLVGVEFTLHGFVDGENIVFMPAVQDHPHAYNNDEGPITGGMGSYSCPNHGLPFLSEEMLDKAEKIMEKTVNSINLEVGPYKGFLYGQFMLTADGPKIIEYNARFGDPEAMNLLPILKTDFLDVCFAIAEGKLDKINIEFENKATVCKYVVPNGYPIDPVRNKELAVDEKAIEDANAILFYASINEENGKLYITGSRSAAVVGISENIEEAEKIAQKAIENFKGEVYYRSDIGTLDLIKKRVERVKKLAK.

In terms of domain architecture, ATP-grasp spans 109-324 (RNLFKKYEID…FLDVCFAIAE (216 aa)). 140–202 (MTSLGKDVVV…EEKLVGVEFT (63 aa)) provides a ligand contact to ATP. Mg(2+)-binding residues include Q282, E294, and N296. Mn(2+)-binding residues include Q282, E294, and N296.

Belongs to the GARS family. Mg(2+) is required as a cofactor. It depends on Mn(2+) as a cofactor.

It carries out the reaction 5-phospho-beta-D-ribosylamine + glycine + ATP = N(1)-(5-phospho-beta-D-ribosyl)glycinamide + ADP + phosphate + H(+). The protein operates within purine metabolism; IMP biosynthesis via de novo pathway; N(1)-(5-phospho-D-ribosyl)glycinamide from 5-phospho-alpha-D-ribose 1-diphosphate: step 2/2. The polypeptide is Phosphoribosylamine--glycine ligase (Methanococcus maripaludis (strain DSM 14266 / JCM 13030 / NBRC 101832 / S2 / LL)).